A 158-amino-acid chain; its full sequence is Glycine/sarcosine/betaine reductase complex component A (158 aa).

U44 is a catalytic residue. A non-standard amino acid (selenocysteine) is located at residue U44.

It belongs to the GrdA family. As to quaternary structure, monomer. Component of the glycine, sarcosine and betaine reductase complexes, together with components B and C.

The catalysed reaction is acetyl phosphate + [thioredoxin]-disulfide + NH4(+) + H2O = [thioredoxin]-dithiol + glycine + phosphate + H(+). It catalyses the reaction acetyl phosphate + methylamine + [thioredoxin]-disulfide + H2O = sarcosine + [thioredoxin]-dithiol + phosphate + H(+). It carries out the reaction acetyl phosphate + trimethylamine + [thioredoxin]-disulfide + H2O = glycine betaine + [thioredoxin]-dithiol + phosphate + H(+). In terms of biological role, in the first step of glycine, betaine and sarcosine reductases, the substrate is bound to component PB via a Schiff base intermediate. Then the PB-activated substrate is nucleophilically attacked by the selenol anion of component PA to transform it to a carboxymethylated selenoether and the respective amine. By action of component PC, acetyl phosphate is formed, leaving component PA in its oxidized state. Finally component PA becomes reduced by the thioredoxin system to start a new catalytic cycle of reductive deamination. The chain is Glycine/sarcosine/betaine reductase complex component A from Clostridium botulinum (strain ATCC 19397 / Type A).